We begin with the raw amino-acid sequence, 240 residues long: MIAFIVLPILAAVLQQSSGSVDFDSESPRKPEIQNKIVDLHNSLRRSVNPTASNMLKMEWYPEAADNAERWAYRCIDSHSPRDSRVLGGIKCGENIYISPVPIKWTEIIHAWHGENKNFKYGIGADPPNAVTGHFTQIVWYKSYHVGCAAAYCPSSEYSYFYVCQYCPAGNIRGKTATPYKSGPPCGDCPSACDNGLCTNPCTKEDKYSNCKSLVQQAGCQDKQMQSDCSAICFCQNKII.

Positions methionine 1–glycine 19 are cleaved as a signal peptide. An SCP domain is found at valine 38 to tyrosine 166. Disulfide bonds link cysteine 75/cysteine 153, cysteine 92/cysteine 167, cysteine 148/cysteine 164, cysteine 186/cysteine 193, cysteine 189/cysteine 198, cysteine 202/cysteine 235, cysteine 211/cysteine 229, and cysteine 220/cysteine 233. Residues cysteine 202 to cysteine 235 form the ShKT domain.

It belongs to the CRISP family. In terms of tissue distribution, expressed by the venom gland.

The protein localises to the secreted. Weakly blocks contraction of smooth muscle elicited by high potassium-induced depolarization, but does not block caffeine-stimulated contraction. May target voltage-gated calcium channels on smooth muscle. This Crotalus adamanteus (Eastern diamondback rattlesnake) protein is Cysteine-rich secretory protein.